A 274-amino-acid chain; its full sequence is 2,3,4,5-tetrahydropyridine-2,6-dicarboxylate N-succinyltransferase (274 aa).

2 residues coordinate substrate: R104 and D141.

This sequence belongs to the transferase hexapeptide repeat family. Homotrimer.

It is found in the cytoplasm. The catalysed reaction is (S)-2,3,4,5-tetrahydrodipicolinate + succinyl-CoA + H2O = (S)-2-succinylamino-6-oxoheptanedioate + CoA. Its pathway is amino-acid biosynthesis; L-lysine biosynthesis via DAP pathway; LL-2,6-diaminopimelate from (S)-tetrahydrodipicolinate (succinylase route): step 1/3. This Salmonella choleraesuis (strain SC-B67) protein is 2,3,4,5-tetrahydropyridine-2,6-dicarboxylate N-succinyltransferase.